A 320-amino-acid polypeptide reads, in one-letter code: L-lactate dehydrogenase 2 (320 aa).

Residues 18 to 19 (AV), aspartate 40, and arginine 45 contribute to the NAD(+) site. Substrate contacts are provided by residues glutamine 88, arginine 94, and 126–129 (NPVD). NAD(+)-binding positions include 124–126 (ITN) and serine 149. Position 154–157 (154–157 (DSAR)) interacts with substrate. Residues arginine 159 and 171–176 (KNVHAY) contribute to the beta-D-fructose 1,6-bisphosphate site. Histidine 181 (proton acceptor) is an active-site residue. Position 228 is a phosphotyrosine (tyrosine 228). Threonine 237 is a substrate binding site.

It belongs to the LDH/MDH superfamily. LDH family. Homotetramer.

Its subcellular location is the cytoplasm. The enzyme catalyses (S)-lactate + NAD(+) = pyruvate + NADH + H(+). Its pathway is fermentation; pyruvate fermentation to lactate; (S)-lactate from pyruvate: step 1/1. Its activity is regulated as follows. Allosterically activated by fructose 1,6-bisphosphate (FBP). In terms of biological role, catalyzes the conversion of lactate to pyruvate. This Bifidobacterium longum subsp. longum (strain ATCC 15707 / DSM 20219 / JCM 1217 / NCTC 11818 / E194b) protein is L-lactate dehydrogenase 2.